Reading from the N-terminus, the 296-residue chain is Zinc finger protein 75A (296 aa).

Residues 1–66 (MYFSQEEWEL…VSPEFKDSAG (66 aa)) enclose the KRAB domain. 5 C2H2-type zinc fingers span residues 161 to 183 (FKCQ…QRIH), 189 to 211 (YKCQ…LTTH), 217 to 239 (YKCS…QRTH), 245 to 267 (FTCH…RRTH), and 273 to 295 (YTCS…QKLH).

This sequence belongs to the krueppel C2H2-type zinc-finger protein family.

The protein localises to the nucleus. In terms of biological role, may be involved in transcriptional regulation. The chain is Zinc finger protein 75A (ZNF75A) from Homo sapiens (Human).